Reading from the N-terminus, the 91-residue chain is Acylphosphatase (91 aa).

Positions C3–H91 constitute an Acylphosphatase-like domain. Active-site residues include R18 and N36.

The protein belongs to the acylphosphatase family.

It carries out the reaction an acyl phosphate + H2O = a carboxylate + phosphate + H(+). In Dehalococcoides mccartyi (strain CBDB1), this protein is Acylphosphatase (acyP).